Consider the following 338-residue polypeptide: Ferrochelatase (338 aa).

Fe cation-binding residues include His202 and Glu283.

This sequence belongs to the ferrochelatase family.

It is found in the cytoplasm. It catalyses the reaction heme b + 2 H(+) = protoporphyrin IX + Fe(2+). The protein operates within porphyrin-containing compound metabolism; protoheme biosynthesis; protoheme from protoporphyrin-IX: step 1/1. Functionally, catalyzes the ferrous insertion into protoporphyrin IX. The chain is Ferrochelatase from Acinetobacter baumannii (strain ATCC 17978 / DSM 105126 / CIP 53.77 / LMG 1025 / NCDC KC755 / 5377).